Reading from the N-terminus, the 769-residue chain is DNA gyrase subunit B (769 aa).

Positions 414–528 (SEIYLVEGDS…NGHIYLAQPP (115 aa)) constitute a Toprim domain. Mg(2+)-binding residues include glutamate 420, aspartate 493, and aspartate 495.

It belongs to the type II topoisomerase GyrB family. Heterotetramer, composed of two GyrA and two GyrB chains. In the heterotetramer, GyrA contains the active site tyrosine that forms a transient covalent intermediate with DNA, while GyrB binds cofactors and catalyzes ATP hydrolysis. Mg(2+) serves as cofactor. The cofactor is Mn(2+). Ca(2+) is required as a cofactor.

The protein localises to the cytoplasm. It carries out the reaction ATP-dependent breakage, passage and rejoining of double-stranded DNA.. Functionally, a type II topoisomerase that negatively supercoils closed circular double-stranded (ds) DNA in an ATP-dependent manner to modulate DNA topology and maintain chromosomes in an underwound state. Negative supercoiling favors strand separation, and DNA replication, transcription, recombination and repair, all of which involve strand separation. Also able to catalyze the interconversion of other topological isomers of dsDNA rings, including catenanes and knotted rings. Type II topoisomerases break and join 2 DNA strands simultaneously in an ATP-dependent manner. The chain is DNA gyrase subunit B from Campylobacter jejuni subsp. jejuni serotype O:2 (strain ATCC 700819 / NCTC 11168).